A 349-amino-acid polypeptide reads, in one-letter code: Histidinol-phosphate aminotransferase (349 aa).

Lysine 210 bears the N6-(pyridoxal phosphate)lysine mark.

Belongs to the class-II pyridoxal-phosphate-dependent aminotransferase family. Histidinol-phosphate aminotransferase subfamily. In terms of assembly, homodimer. Pyridoxal 5'-phosphate serves as cofactor.

The enzyme catalyses L-histidinol phosphate + 2-oxoglutarate = 3-(imidazol-4-yl)-2-oxopropyl phosphate + L-glutamate. The protein operates within amino-acid biosynthesis; L-histidine biosynthesis; L-histidine from 5-phospho-alpha-D-ribose 1-diphosphate: step 7/9. The chain is Histidinol-phosphate aminotransferase from Flavobacterium johnsoniae (strain ATCC 17061 / DSM 2064 / JCM 8514 / BCRC 14874 / CCUG 350202 / NBRC 14942 / NCIMB 11054 / UW101) (Cytophaga johnsonae).